A 455-amino-acid chain; its full sequence is Tubulin delta chain (455 aa).

Residue 143 to 149 (AGGTGSG) coordinates GTP.

Belongs to the tubulin family. As to quaternary structure, found in a complex with TEDC1, TEDC2, TUBE1 and TUBD1. Highly expressed in testis.

The protein resides in the cell projection. It localises to the cilium. Its subcellular location is the cytoplasm. It is found in the cytoskeleton. The protein localises to the microtubule organizing center. The protein resides in the centrosome. It localises to the centriole. Its subcellular location is the nucleus. Its function is as follows. Acts as a positive regulator of hedgehog signaling and regulates ciliary function. In Mus musculus (Mouse), this protein is Tubulin delta chain (Tubd1).